The chain runs to 482 residues: MSYPQGYLYQPSASLALYSCPAYSTTVISGPRTDELGRSPSGSAFSPYAGSTAFTASSAGFNSPLQYSGDPAAAFTSYVGSPYDHSAGMAGSLGYHPYAAPLGTYPYGDPAYRKNATRDATATLKAWLNEHRKNPYPTKGEKIMLAIITKMTLTQVSTWFANARRRLKKENKMTWTPRNRSEDEEDDENIDLEKNEEDDPRKLEEKGDQDGDAGDQKRSPSAVDFDRLEGEVRQGKELDQTRSDSEQNEVEERNDLLSKNSAPPTSPLCPPDQSPQAQEDQNLHRHTVHNHHHQSIQQLHHHSHQSHPLDLVHRNALVQHGPVTNNATSVIHSPPASTSKPKLWSLAEIATSSDKVKESSDAAAVAGTTPAQSMVVSASSPSRSPSAQCHFPSNTVLSRPLYYSNPFYPGYTNYGTFSHLHSHHGPSTTSPTVNSTHHFSGINQTVLNRAEALAKECKLRSQSQADLNKDTPYEMKKGMSSI.

The segment at residues 109-171 is a DNA-binding region (homeobox); sequence DPAYRKNATR…NARRRLKKEN (63 aa). Disordered regions lie at residues 173 to 307 and 462 to 482; these read MTWT…HQSH and QSQA…MSSI. The span at 182 to 198 shows a compositional bias: acidic residues; the sequence is EDEEDDENIDLEKNEED. Over residues 199 to 256 the composition is skewed to basic and acidic residues; that stretch reads DPRKLEEKGDQDGDAGDQKRSPSAVDFDRLEGEVRQGKELDQTRSDSEQNEVEERNDL. Residues 264-273 show a composition bias toward pro residues; that stretch reads PTSPLCPPDQ. The span at 284–305 shows a compositional bias: basic residues; sequence HRHTVHNHHHQSIQQLHHHSHQ. Basic and acidic residues predominate over residues 467 to 482; sequence LNKDTPYEMKKGMSSI.

The protein belongs to the TALE/IRO homeobox family. In terms of tissue distribution, expressed in the neural plate in overlapping patterns with other irx members, which all share an anterior border of expression. Broadly expressed in the tailbud rhombencephalon (hindbrain). Outside the nervous system and at tailbud stages, expressed in the developing otic vesicle and branchial arches.

The protein resides in the nucleus. Acts partially redundantly with other irx members in neural patterning. Required for formation of the posterior forebrain, midbrain, hindbrain, and to a lesser extent, spinal cord. Patterns the neuroectoderm in both the anterior/posterior and dorsal/ventral axes. Does not appear to play a role in pronephros kidney development. Involved in craniofacial and gonadal development. Modulates the migration of progenitor cell populations in branchial arches and gonads by repressing CXCL12. This chain is Iroquois-class homeodomain protein irx-5, found in Xenopus tropicalis (Western clawed frog).